The primary structure comprises 192 residues: Riboflavin kinase (192 aa).

Mg(2+) contacts are provided by Thr-47 and Asn-49. Glu-129 serves as the catalytic Nucleophile.

Belongs to the flavokinase family. Zn(2+) serves as cofactor. It depends on Mg(2+) as a cofactor.

It carries out the reaction riboflavin + ATP = FMN + ADP + H(+). The protein operates within cofactor biosynthesis; FMN biosynthesis; FMN from riboflavin (ATP route): step 1/1. In terms of biological role, catalyzes the phosphorylation of riboflavin (vitamin B2) to form flavin mononucleotide (FMN) coenzyme. The polypeptide is Riboflavin kinase (FMN1) (Yarrowia lipolytica (strain CLIB 122 / E 150) (Yeast)).